A 399-amino-acid polypeptide reads, in one-letter code: Argininosuccinate synthase (399 aa).

Residues 10-18 (AYSGGVDTS) and alanine 38 each bind ATP. Tyrosine 89 is an L-citrulline binding site. ATP is bound at residue glycine 119. Residues threonine 121, asparagine 125, and aspartate 126 each contribute to the L-aspartate site. L-citrulline is bound at residue asparagine 125. L-citrulline contacts are provided by arginine 129, serine 177, serine 186, glutamate 262, and tyrosine 274.

The protein belongs to the argininosuccinate synthase family. Type 1 subfamily. As to quaternary structure, homotetramer.

The protein localises to the cytoplasm. The enzyme catalyses L-citrulline + L-aspartate + ATP = 2-(N(omega)-L-arginino)succinate + AMP + diphosphate + H(+). It functions in the pathway amino-acid biosynthesis; L-arginine biosynthesis; L-arginine from L-ornithine and carbamoyl phosphate: step 2/3. The chain is Argininosuccinate synthase from Rippkaea orientalis (strain PCC 8801 / RF-1) (Cyanothece sp. (strain PCC 8801)).